The chain runs to 153 residues: Actin-related protein 2/3 complex subunit 5-like protein (153 aa).

Position 64 is a phosphoserine (S64).

This sequence belongs to the ARPC5 family. In terms of assembly, may be a component of the Arp2/3 complex in which it may replace ARPC5.

It localises to the cytoplasm. The protein localises to the cytoskeleton. Its function is as follows. May function as component of the Arp2/3 complex which is involved in regulation of actin polymerization and together with an activating nucleation-promoting factor (NPF) mediates the formation of branched actin networks. The sequence is that of Actin-related protein 2/3 complex subunit 5-like protein (Arpc5l) from Mus musculus (Mouse).